Here is a 253-residue protein sequence, read N- to C-terminus: Polyprenal reductase (253 aa).

4 helical membrane passes run 18–38, 78–98, 123–143, and 200–220; these read LSFF…PEFL, FLSL…IIFG, HYLV…ISLY, and IIYS…VWVI.

The protein belongs to the steroid 5-alpha reductase family. Polyprenal reductase subfamily.

Its subcellular location is the endoplasmic reticulum membrane. The catalysed reaction is a di-trans,poly-cis-dolichal + NADP(+) = a di-trans,poly-cis-polyprenal + NADPH + H(+). The protein operates within protein modification; protein glycosylation. Plays a key role in early steps of protein N-linked glycosylation by being involved in the conversion of polyprenol into dolichol. Acts as a polyprenal reductase that mediates the reduction of polyprenal into dolichal in a NADP-dependent mechanism. Dolichols are required for the synthesis of dolichol-linked monosaccharides and the oligosaccharide precursor used for N-glycosylation. This Saccharomyces cerevisiae (strain ATCC 204508 / S288c) (Baker's yeast) protein is Polyprenal reductase.